We begin with the raw amino-acid sequence, 130 residues long: Small ribosomal subunit protein uS8 (130 aa).

Belongs to the universal ribosomal protein uS8 family. Part of the 30S ribosomal subunit. Contacts proteins S5 and S12.

Functionally, one of the primary rRNA binding proteins, it binds directly to 16S rRNA central domain where it helps coordinate assembly of the platform of the 30S subunit. The chain is Small ribosomal subunit protein uS8 from Coxiella burnetii (strain Dugway 5J108-111).